Consider the following 230-residue polypeptide: Cytidylate kinase (230 aa).

12 to 20 (GPSGAGKGT) serves as a coordination point for ATP.

This sequence belongs to the cytidylate kinase family. Type 1 subfamily.

Its subcellular location is the cytoplasm. It carries out the reaction CMP + ATP = CDP + ADP. The catalysed reaction is dCMP + ATP = dCDP + ADP. The sequence is that of Cytidylate kinase from Shewanella piezotolerans (strain WP3 / JCM 13877).